The chain runs to 442 residues: Putative toxin YopC (442 aa).

This sequence in the C-terminal section; belongs to the MbcT/ParT/Res family. Forms a complex with cognate antitoxin YopB.

In terms of biological role, may be the toxic component of a type II toxin-antitoxin (TA) system. Neutralized by its cognate antitoxin YopB. This Bacillus subtilis (strain 168) protein is Putative toxin YopC (yopC).